The chain runs to 267 residues: Orotidine 5'-phosphate decarboxylase (267 aa).

K93 serves as the catalytic Proton donor.

The protein belongs to the OMP decarboxylase family. Type 2 subfamily.

The catalysed reaction is orotidine 5'-phosphate + H(+) = UMP + CO2. Its pathway is pyrimidine metabolism; UMP biosynthesis via de novo pathway; UMP from orotate: step 2/2. The protein is Orotidine 5'-phosphate decarboxylase of Herpetosiphon aurantiacus (strain ATCC 23779 / DSM 785 / 114-95).